A 634-amino-acid polypeptide reads, in one-letter code: Frizzled and smoothened-like protein D (634 aa).

A signal peptide spans 1–21 (MINKFKFYLIFLKLILILVNC). The Extracellular segment spans residues 22–257 (QNSLNDYGFG…QMDSVINMSK (236 aa)). One can recognise an FZ domain in the interval 34–178 (DESSICTSYI…LTKYGYTANG (145 aa)). 5 N-linked (GlcNAc...) asparagine glycosylation sites follow: Asn-126, Asn-168, Asn-215, Asn-243, and Asn-254. Residues 258–278 (AMSSISFVLSLFNVITFGLLI) traverse the membrane as a helical segment. Topologically, residues 279-287 (KKKSKYNVC) are cytoplasmic. Residues 288 to 308 (IALMAIGSSFIYLSDIINYGV) form a helical membrane-spanning segment. The Extracellular portion of the chain corresponds to 309-335 (GIEKQLCPEPGRVATQRVDSLCGFTGS). A helical transmembrane segment spans residues 336–356 (IFHIGITLCVLWSMTMGIVLY). Topologically, residues 357–368 (SKIKQFKLPNFR) are cytoplasmic. Residues 369 to 389 (YFLIGNLSFTVVTLIILASAK) traverse the membrane as a helical segment. Residues 390–410 (KFQGGNGFLECWMRDRWYVVA) are Extracellular-facing. The helical transmembrane segment at 411-431 (IFWIPCGIALLLGVLSICGVI) threads the bilayer. Over 432 to 454 (FEIYKISKNVSLKDSKVVIRELK) the chain is Cytoplasmic. Residues 455–475 (PFVLVVTVSASLIYLFVFYFD) form a helical membrane-spanning segment. Residues 476-513 (SESKYDFYKKGVEDYILCLLTSENPLDECYTVGPNFNS) are Extracellular-facing. A helical membrane pass occupies residues 514–534 (YFMFYFLIRFFGILFFGIFGT). The Cytoplasmic portion of the chain corresponds to 535–634 (SEIARNAWTE…MEIELDSIDI (100 aa)). Residues 560-624 (VSSSTRGGGG…NNNNNDNNNK (65 aa)) are disordered. Low complexity-rich tracts occupy residues 572-592 (SGIK…NNST) and 609-622 (DNTI…NDNN).

The protein belongs to the G-protein coupled receptor Fz/Smo family.

The protein localises to the membrane. This is Frizzled and smoothened-like protein D (fslD) from Dictyostelium discoideum (Social amoeba).